A 240-amino-acid polypeptide reads, in one-letter code: Insulin-like growth factor-binding protein 3 receptor (240 aa).

The signal sequence occupies residues 1–38 (MGSCQAGHNLHLCLAHHPPLVCATLILLLLGLSGLGLG). Over 39–204 (GFLLTHTTGL…SEELALCGSR (166 aa)) the chain is Extracellular. Asparagine 167 is a glycosylation site (N-linked (GlcNAc...) asparagine). The chain crosses the membrane as a helical span at residues 205–225 (VLGLGFFLVLLCGLLCCTTAV). Over 226–240 (CFHPRPEFHWSRTRL) the chain is Cytoplasmic.

Interacts with IGFBP3. Interacts with CASP8.

The protein localises to the cell membrane. Functionally, cell death receptor specific for IGFBP3, may mediate caspase-8-dependent apoptosis upon ligand binding. This Mus musculus (Mouse) protein is Insulin-like growth factor-binding protein 3 receptor (Tmem219).